We begin with the raw amino-acid sequence, 300 residues long: Forkhead transcription factor fkh-9 (300 aa).

The segment at residues 66-161 is a DNA-binding region (fork-head); that stretch reads RPSLSYKDLI…DKQTLRRRNR (96 aa). Positions 153–208 are disordered; the sequence is KQTLRRRNRQQPRALAKKSDAGRTLSRDDRGSSGSGETSPSPSQPSISPPNENPMP. Over residues 169-183 the composition is skewed to basic and acidic residues; it reads KKSDAGRTLSRDDRG. Residues 187-198 are compositionally biased toward low complexity; that stretch reads SGETSPSPSQPS.

As to expression, expressed in mechanosensory neurons.

Its subcellular location is the nucleus. Its function is as follows. Transcription factor. Binds to the regulatory elements of genes that contain the sequence motif 5'-TTGTTTCT-3'. Involved in regulating intestinal transcription of vitellogenin vit-2, acting in concert with transcription factors elt-2, mab-3 and daf-16, and also the TGF-beta/Sma/Mab pathway. Functions downstream of the insulin/IGF-1-like signaling (IIS) mediated pathway, in regeneration of axons after injury and in short-term memory, perhaps acting in neurons, and in modulation of longevity, perhaps acting non-neuronally. Plays a role in the modulation of endoplasmic reticulum (ER) homeostasis during chemical and pathogen stress, including exposure to the Gram-negative bacterium P.aeruginosa. The protein is Forkhead transcription factor fkh-9 of Caenorhabditis elegans.